Reading from the N-terminus, the 477-residue chain is ATP synthase subunit beta (477 aa).

Position 148–155 (148–155 (GGAGVGKT)) interacts with ATP.

This sequence belongs to the ATPase alpha/beta chains family. In terms of assembly, F-type ATPases have 2 components, CF(1) - the catalytic core - and CF(0) - the membrane proton channel. CF(1) has five subunits: alpha(3), beta(3), gamma(1), delta(1), epsilon(1). CF(0) has three main subunits: a(1), b(2) and c(9-12). The alpha and beta chains form an alternating ring which encloses part of the gamma chain. CF(1) is attached to CF(0) by a central stalk formed by the gamma and epsilon chains, while a peripheral stalk is formed by the delta and b chains.

It localises to the cell inner membrane. The enzyme catalyses ATP + H2O + 4 H(+)(in) = ADP + phosphate + 5 H(+)(out). Produces ATP from ADP in the presence of a proton gradient across the membrane. The catalytic sites are hosted primarily by the beta subunits. This is ATP synthase subunit beta from Psychrobacter arcticus (strain DSM 17307 / VKM B-2377 / 273-4).